A 520-amino-acid polypeptide reads, in one-letter code: GMP synthase [glutamine-hydrolyzing] (520 aa).

In terms of domain architecture, Glutamine amidotransferase type-1 spans alanine 3–aspartate 200. Cysteine 84 serves as the catalytic Nucleophile. Catalysis depends on residues histidine 175 and glutamate 177. Positions tryptophan 201–glutamine 386 constitute a GMPS ATP-PPase domain. An ATP-binding site is contributed by serine 228 to serine 234.

In terms of assembly, homodimer.

It catalyses the reaction XMP + L-glutamine + ATP + H2O = GMP + L-glutamate + AMP + diphosphate + 2 H(+). It participates in purine metabolism; GMP biosynthesis; GMP from XMP (L-Gln route): step 1/1. In terms of biological role, catalyzes the synthesis of GMP from XMP. In Wolbachia pipientis wMel, this protein is GMP synthase [glutamine-hydrolyzing].